A 681-amino-acid chain; its full sequence is SRSF protein kinase 2 (681 aa).

The interval 1–63 (MSVNSEKSSS…EQEDPADYCK (63 aa)) is disordered. The segment covering 22–41 (LVPPPPPPPPPPPLPDPAPP) has biased composition (pro residues). The segment covering 42 to 59 (EPEEEILGSDDEEQEDPA) has biased composition (acidic residues). Serine 50 carries the post-translational modification Phosphoserine. The Protein kinase domain occupies 79-681 (YHVIRKLGWG…ECLRHPWLNS (603 aa)). Residues 85 to 93 (LGWGHFSTV) and lysine 108 contribute to the ATP site. Catalysis depends on aspartate 212, which acts as the Proton acceptor. Disordered regions lie at residues 237–270 (WQKA…KKKL), 302–452 (ENIT…PLFS), and 467–499 (GSPL…KTKT). Threonine 331 and threonine 332 each carry phosphothreonine. Serine 378 is modified (phosphoserine). Positions 395–419 (QLEDEEDDEDDCANPEEYNLDEPNA) are enriched in acidic residues. Residues 421-431 (SDYTYSSSYEQ) show a composition bias toward polar residues. Serine 468 is modified (phosphoserine). Threonine 471 bears the Phosphothreonine mark. Serine 477, serine 479, and serine 483 each carry phosphoserine. Threonine 485 is modified (phosphothreonine; by PKB/AKT1). A phosphoserine mark is found at serine 487 and serine 490. At serine 581 the chain carries Phosphoserine; by CK2.

The protein belongs to the protein kinase superfamily. CMGC Ser/Thr protein kinase family. In terms of assembly, associates with U4/U6-U5 tri-small nuclear ribonucleoproteins (U4/U6-U5 tri-snRNPs). Interacts with PKB/AKT1 in a phosphorylation-dependent manner. The phosphorylated form (by PKB/AKT1) interacts with YWHAB and YWHAE. Interaction with YWHAB suppresses its cleavage by caspases and inhibits the release of its N-terminal pro-apoptotic fragment. Interacts with SFN. Interacts with ACIN1. Interacts with POLR2A/RNA polymerase II; the interaction occurs during the co-transcriptional formation of inappropriate R-loops. It depends on Mg(2+) as a cofactor. Post-translationally, phosphorylation at Thr-485 by PKB/AKT1 enhances its stimulatory activity in triggering cyclin-D1 (CCND1) expression and promoting apoptosis in neurons, which can be blocked by YWHAB. It also enhances its protein kinase activity toward ACIN1 and SRSF2, promotes its nuclear translocation and prevents its proteolytic cleavage. In terms of processing, proteolytically cleaved at Asp-137 and Asp-401 by caspase-3 during apoptotic cell death. Cleavage at Asp-137 which is the major site of cleavage, produces a small N-terminal fragment that translocates into nucleus and promotes VP16-induced apoptosis. As to expression, expressed in testes, lung and brain.

It is found in the cytoplasm. The protein localises to the nucleus. The protein resides in the nucleoplasm. It localises to the nucleus speckle. Its subcellular location is the chromosome. The catalysed reaction is L-seryl-[protein] + ATP = O-phospho-L-seryl-[protein] + ADP + H(+). It carries out the reaction L-threonyl-[protein] + ATP = O-phospho-L-threonyl-[protein] + ADP + H(+). Its activity is regulated as follows. Activated by phosphorylation on Ser-50 and Ser-581. Serine/arginine-rich protein-specific kinase which specifically phosphorylates its substrates at serine residues located in regions rich in arginine/serine dipeptides, known as RS domains and is involved in the phosphorylation of SR splicing factors and the regulation of splicing. Promotes neuronal apoptosis by up-regulating cyclin-D1 (CCND1) expression. This is done by the phosphorylation of SRSF2, leading to the suppression of p53/TP53 phosphorylation thereby relieving the repressive effect of p53/TP53 on cyclin-D1 (CCND1) expression. Phosphorylates ACIN1, and redistributes it from the nuclear speckles to the nucleoplasm, resulting in cyclin A1 but not cyclin A2 up-regulation. Plays an essential role in spliceosomal B complex formation via the phosphorylation of DDX23/PRP28. Probably by phosphorylating DDX23, leads to the suppression of incorrect R-loops formed during transcription; R-loops are composed of a DNA:RNA hybrid and the associated non-template single-stranded DNA. In Mus musculus (Mouse), this protein is SRSF protein kinase 2.